We begin with the raw amino-acid sequence, 393 residues long: Endoplasmic reticulum junction formation protein lunapark-A (393 aa).

Residues 1–45 (MGAVVSRWRAKPSTVEVLEGLDKDIQVLEEYREKNHKQLKLWVYR) lie on the Cytoplasmic side of the membrane. The helical transmembrane segment at 46–66 (LLLYSALLYLMACAVVYAWYI) threads the bilayer. Residues 67–69 (PER) lie on the Lumenal side of the membrane. Residues 70 to 90 (MIGKLIVASPFLLFPLLIWLL) traverse the membrane as a helical segment. The Cytoplasmic segment spans residues 91–393 (RKLLIILYNK…EQDVSAMEVE (303 aa)). Residues 95 to 130 (IILYNKRTERNNEKLEELKAEKKKILEQVMETETYK) adopt a coiled-coil conformation. Residues 146-209 (KLELETQPIG…PPEKGLSAST (64 aa)) form a disordered region. Over residues 176-190 (TGRPPPVPVPGPSVP) the composition is skewed to pro residues. The C4-type; plays a role in ER morphology zinc finger occupies 269-294 (CQQCLSHNGMALKEEFEYIAFRCAYC). The segment at 314-393 (AAEAKTSQDP…EQDVSAMEVE (80 aa)) is disordered. 2 stretches are compositionally biased toward basic and acidic residues: residues 340–353 (ESKEAGPEPVKAGD) and 364–383 (EEMKPGDPEPHTDIPDKSDG).

This sequence belongs to the lunapark family. As to quaternary structure, homodimer; homodimerization requires the C4-type zinc finger motif and decreases during mitosis in a phosphorylation-dependent manner. Phosphorylated. Phosphorylation occurs during interphase. Phosphorylation also occurs during mitosis; these phosphorylations reduce both its homodimerization and the ER three-way tubular junction formation.

The protein localises to the endoplasmic reticulum membrane. Functionally, endoplasmic reticulum (ER)-shaping membrane protein that plays a role in determining ER morphology. Involved in the stabilization of nascent three-way ER tubular junctions within the ER network. May also play a role as a curvature-stabilizing protein within three-way ER tubular junction network. This is Endoplasmic reticulum junction formation protein lunapark-A (lnpka) from Danio rerio (Zebrafish).